The chain runs to 99 residues: MRIGVVGDPDVVVGFRLAGLTDVYEVKSPEQAAKAIEELNSNSEIGLIITTERIGEQVRDTISAVKKVVVEVPDKNGPIVRENDPVKVLVRNAVGVDIK.

This sequence belongs to the V-ATPase F subunit family. In terms of assembly, has multiple subunits with at least A(3), B(3), C, D, E, F, H, I and proteolipid K(x).

It localises to the cell membrane. Functionally, component of the A-type ATP synthase that produces ATP from ADP in the presence of a proton gradient across the membrane. The chain is A-type ATP synthase subunit F from Methanococcus maripaludis (strain C5 / ATCC BAA-1333).